The primary structure comprises 485 residues: Inosine-5'-monophosphate dehydrogenase (485 aa).

2 CBS domains span residues 99–154 (IVED…LVKE) and 156–215 (MTKD…VRDE). Residues D247 and 294–296 (GIG) each bind NAD(+). Positions 296 and 298 each coordinate K(+). S299 contacts IMP. C301 contacts K(+). The active-site Thioimidate intermediate is C301. IMP is bound by residues 334–336 (DGG), 357–358 (GN), and 381–385 (YRGMG). R397 acts as the Proton acceptor in catalysis. Position 412 (E412) interacts with IMP. Residues E466, S467, and H468 each contribute to the K(+) site.

It belongs to the IMPDH/GMPR family. As to quaternary structure, homotetramer. Requires K(+) as cofactor.

It catalyses the reaction IMP + NAD(+) + H2O = XMP + NADH + H(+). It functions in the pathway purine metabolism; XMP biosynthesis via de novo pathway; XMP from IMP: step 1/1. Its activity is regulated as follows. Mycophenolic acid (MPA) is a non-competitive inhibitor that prevents formation of the closed enzyme conformation by binding to the same site as the amobile flap. In contrast, mizoribine monophosphate (MZP) is a competitive inhibitor that induces the closed conformation. MPA is a potent inhibitor of mammalian IMPDHs but a poor inhibitor of the bacterial enzymes. MZP is a more potent inhibitor of bacterial IMPDH. Catalyzes the conversion of inosine 5'-phosphate (IMP) to xanthosine 5'-phosphate (XMP), the first committed and rate-limiting step in the de novo synthesis of guanine nucleotides, and therefore plays an important role in the regulation of cell growth. The sequence is that of Inosine-5'-monophosphate dehydrogenase from Pyrococcus abyssi (strain GE5 / Orsay).